A 373-amino-acid polypeptide reads, in one-letter code: Cell surface Cu-only superoxide dismutase ARB_03674 (373 aa).

The signal sequence occupies residues 1–55 (MIWKQPPRRMGEMGGSLSRRFGNAAASWAVWRVSRSCFSLLFFFYFFLFFSSSSL). 2 N-linked (GlcNAc...) asparagine glycosylation sites follow: N75 and N141. 3 residues coordinate Cu cation: H194, H196, and H212. C206 and C289 are oxidised to a cystine. N-linked (GlcNAc...) asparagine glycans are attached at residues N254 and N274. H280 lines the Cu cation pocket. N-linked (GlcNAc...) asparagine glycans are attached at residues N283 and N291. The tract at residues 329-348 (GHAPTISATYTPTPTPSPPA) is disordered. A compositionally biased stretch (low complexity) spans 331–340 (APTISATYTP). G352 carries the GPI-anchor amidated glycine lipid modification. A propeptide spans 353–373 (AGRLVGFSLGAIMAALVPLAL) (removed in mature form).

This sequence belongs to the Cu-Zn superoxide dismutase family. In terms of assembly, monomer. It depends on Cu cation as a cofactor. In terms of processing, the GPI-anchor is attached to the protein in the endoplasmic reticulum and serves to target the protein to the cell surface. There, the glucosamine-inositol phospholipid moiety is cleaved off and the GPI-modified mannoprotein is covalently attached via its lipidless GPI glycan remnant to the 1,6-beta-glucan of the outer cell wall layer.

The protein localises to the secreted. It is found in the cell wall. The protein resides in the cell membrane. It carries out the reaction 2 superoxide + 2 H(+) = H2O2 + O2. Its function is as follows. Superoxide dismutases serve to convert damaging superoxide radicals, a key form of ROS, to less damaging hydrogen peroxide that can be converted into water by catalase action. Degrades host-derived reactive oxygen species to escape innate immune surveillance. Involved in the occurrence of miconazole-tolerant persisters in biofilms. Persisters are cells that survive high doses of an antimicrobial agent. The unusual attributes of SOD5-like fungal proteins, including the absence of zinc and an open active site that readily captures extracellular copper, make these SODs well suited to meet challenges in zinc and copper availability at the host-pathogen interface. The polypeptide is Cell surface Cu-only superoxide dismutase ARB_03674 (Arthroderma benhamiae (strain ATCC MYA-4681 / CBS 112371) (Trichophyton mentagrophytes)).